The chain runs to 380 residues: Probable protein phosphatase 2C 34 (380 aa).

Residues 32-335 (AAGEFSMAAA…DDISVIVVYL (304 aa)) form the PPM-type phosphatase domain. 4 residues coordinate Mn(2+): Asp-66, Gly-67, Asp-267, and Asp-326.

The protein belongs to the PP2C family. Mg(2+) serves as cofactor. The cofactor is Mn(2+).

The enzyme catalyses O-phospho-L-seryl-[protein] + H2O = L-seryl-[protein] + phosphate. The catalysed reaction is O-phospho-L-threonyl-[protein] + H2O = L-threonyl-[protein] + phosphate. The polypeptide is Probable protein phosphatase 2C 34 (BIPP2C2) (Oryza sativa subsp. indica (Rice)).